A 132-amino-acid chain; its full sequence is Large ribosomal subunit protein uL14 (132 aa).

It belongs to the universal ribosomal protein uL14 family. Part of the 50S ribosomal subunit. Forms a cluster with proteins L3 and L24e, part of which may contact the 16S rRNA in 2 intersubunit bridges.

Its function is as follows. Binds to 23S rRNA. Forms part of two intersubunit bridges in the 70S ribosome. This Methanosarcina acetivorans (strain ATCC 35395 / DSM 2834 / JCM 12185 / C2A) protein is Large ribosomal subunit protein uL14.